The sequence spans 344 residues: Small ribosomal subunit biogenesis GTPase RsgA (344 aa).

Positions 100-268 constitute a CP-type G domain; sequence KNELSRPDYY…LIDSPGIREF (169 aa). Residues 156–159 and 210–218 contribute to the GTP site; these read NKID and GQSGVGKSS. The Zn(2+) site is built by cysteine 292, cysteine 297, histidine 299, and cysteine 305.

It belongs to the TRAFAC class YlqF/YawG GTPase family. RsgA subfamily. Monomer. Associates with 30S ribosomal subunit, binds 16S rRNA. Requires Zn(2+) as cofactor.

The protein localises to the cytoplasm. Its function is as follows. One of several proteins that assist in the late maturation steps of the functional core of the 30S ribosomal subunit. Helps release RbfA from mature subunits. May play a role in the assembly of ribosomal proteins into the subunit. Circularly permuted GTPase that catalyzes slow GTP hydrolysis, GTPase activity is stimulated by the 30S ribosomal subunit. The polypeptide is Small ribosomal subunit biogenesis GTPase RsgA (Actinobacillus pleuropneumoniae serotype 5b (strain L20)).